Here is a 121-residue protein sequence, read N- to C-terminus: Small ribosomal subunit protein uS13 (121 aa).

The segment at 90-121 is disordered; that stretch reads RHRRGLPVRGQHTKNNARTRKGKKVSIAGRKK.

Belongs to the universal ribosomal protein uS13 family. Part of the 30S ribosomal subunit. Forms a loose heterodimer with protein S19. Forms two bridges to the 50S subunit in the 70S ribosome.

Functionally, located at the top of the head of the 30S subunit, it contacts several helices of the 16S rRNA. In the 70S ribosome it contacts the 23S rRNA (bridge B1a) and protein L5 of the 50S subunit (bridge B1b), connecting the 2 subunits; these bridges are implicated in subunit movement. Contacts the tRNAs in the A and P-sites. The polypeptide is Small ribosomal subunit protein uS13 (Lactiplantibacillus plantarum (strain ATCC BAA-793 / NCIMB 8826 / WCFS1) (Lactobacillus plantarum)).